A 137-amino-acid chain; its full sequence is NADH-quinone oxidoreductase subunit A (137 aa).

3 helical membrane-spanning segments follow: residues 12-32, 66-86, and 96-116; these read WGFA…LGVS, FYLV…LFAW, and TGFV…VYLF.

This sequence belongs to the complex I subunit 3 family. NDH-1 is composed of 13 different subunits. Subunits NuoA, H, J, K, L, M, N constitute the membrane sector of the complex.

It localises to the cell inner membrane. The enzyme catalyses a quinone + NADH + 5 H(+)(in) = a quinol + NAD(+) + 4 H(+)(out). Functionally, NDH-1 shuttles electrons from NADH, via FMN and iron-sulfur (Fe-S) centers, to quinones in the respiratory chain. The immediate electron acceptor for the enzyme in this species is believed to be ubiquinone. Couples the redox reaction to proton translocation (for every two electrons transferred, four hydrogen ions are translocated across the cytoplasmic membrane), and thus conserves the redox energy in a proton gradient. In Pseudomonas fluorescens (strain Pf0-1), this protein is NADH-quinone oxidoreductase subunit A.